The primary structure comprises 167 residues: uncharacterized protein (167 aa).

It is found in the mitochondrion. This is an uncharacterized protein from Marchantia polymorpha (Common liverwort).